A 64-amino-acid chain; its full sequence is Fatty acid-binding protein (64 aa).

Belongs to the calycin superfamily. Fatty-acid binding protein (FABP) family.

It localises to the cytoplasm. Its function is as follows. FABPs are thought to play a role in the intracellular transport of long-chain fatty acids and their acyl-CoA esters. This Acarus siro (Flour mite) protein is Fatty acid-binding protein.